The primary structure comprises 308 residues: Ribosomal RNA large subunit methyltransferase F (308 aa).

The protein belongs to the methyltransferase superfamily. METTL16/RlmF family.

The protein resides in the cytoplasm. The catalysed reaction is adenosine(1618) in 23S rRNA + S-adenosyl-L-methionine = N(6)-methyladenosine(1618) in 23S rRNA + S-adenosyl-L-homocysteine + H(+). Functionally, specifically methylates the adenine in position 1618 of 23S rRNA. The protein is Ribosomal RNA large subunit methyltransferase F of Shigella dysenteriae serotype 1 (strain Sd197).